A 419-amino-acid chain; its full sequence is MGTQKPRILPWLISQLNQGQLEGVAWLDEGHTRFRIPWKHGLRQDAQQEDFGIFQAWAEASGAYTPGKDKPDLPTWKRNFRSALNRKEALRLAEDHSKDPHDPHKIYEFVTSGVGDFPEPDTSLDLSGRYSTSDTHEDSLDKLLSGMDLASDAGPQSLTLALEQPPQLSLSPSVDAPASCPNLGVRENPLKQLLANDDEWEFQVTVFYRGCQVFQQTVCSPGGLRLVGSEAEDGTLAGQPVRLPDPAASLTDRGVADYVRRVLSCLGGGLALWRAGQWLWAQRLGHCHVYWAMGEELIPDSGHKPDGEVPKDREGGVFDLGPFIEDLIAFIEGSRRSPRYTLWFCMGQSWPQDEPWVKRLVMVKVVPMCLRALVDMARDGGASSLENTVDLHISNSHPLSLTSDQYKACLRDLVEDMDF.

Threonine 3 is modified (phosphothreonine). Residues 5-111 (KPRILPWLIS…DPHKIYEFVT (107 aa)) constitute a DNA-binding region (IRF tryptophan pentad repeat). The residue at position 14 (serine 14) is a Phosphoserine. Threonine 75 carries the phosphothreonine modification. 2 positions are modified to phosphoserine: serine 97 and serine 123. The interval 118–137 (PEPDTSLDLSGRYSTSDTHE) is disordered. Residues 140-419 (LDKLLSGMDL…LRDLVEDMDF (280 aa)) form a mediates interaction with ZDHHC11 region. Lysine 191 is covalently cross-linked (Glycyl lysine isopeptide (Lys-Gly) (interchain with G-Cter in ISG15)). The segment at 198–358 (DEWEFQVTVF…SWPQDEPWVK (161 aa)) is interaction with HERC5. Phosphothreonine occurs at positions 235 and 251. Cysteine 265 and cysteine 287 are disulfide-bonded. Residues lysine 358 and lysine 364 each participate in a glycyl lysine isopeptide (Lys-Gly) (interchain with G-Cter in ISG15) cross-link. N6-acetyllysine is present on lysine 364. Phosphoserine is present on serine 383. Position 384 is a diphosphoserine (serine 384). Residue serine 384 is modified to Phosphoserine; by TBK1. Serine 394 is subject to Phosphoserine; by IKKE. Serine 396 carries the post-translational modification Phosphoserine. The residue at position 402 (threonine 402) is a Phosphothreonine.

The protein belongs to the IRF family. In terms of assembly, monomer. Homodimer; phosphorylation-induced. Interacts (when phosphorylated) with CREBBP. Interacts with MAVS (via phosphorylated pLxIS motif). Interacts with TICAM1 (via phosphorylated pLxIS motif). Interacts with STING1 (via phosphorylated pLxIS motif). Interacts with IKBKE and TBK1. Interacts with TICAM2. Interacts with RBCK1. Interacts with HERC5. Interacts with DDX3X; the interaction allows the phosphorylation and activation of IRF3 by IKBKE. Interacts with TRIM21 and ULK1, in the presence of TRIM21; this interaction leads to IRF3 degradation by autophagy. Interacts with RIOK3; RIOK3 probably mediates the interaction of TBK1 with IRF3. Interacts with ILRUN; the interaction inhibits IRF3 binding to its DNA consensus sequence. Interacts with LYAR; this interaction impairs IRF3 DNA-binding activity. Interacts with TRAF3. Interacts with ZDHHC11; ZDHHC11 recruits IRF3 to STING1 upon DNA virus infection and thereby promotes IRF3 activation. Interacts with HSP90AA1; the interaction mediates IRF3 association with TOMM70. Interacts with BCL2; the interaction decreases upon Sendai virus infection. Interacts with BAX; the interaction is direct, increases upon virus infection and mediates the formation of the apoptosis complex TOMM70:HSP90AA1:IRF3:BAX. Interacts with DDX56. Interacts with NBR1. (Microbial infection) Interacts with Porcine epidemic diarrhea virus E protein; this interaction prevents IRF3 translocation to the nucleus and thereby prevents type I interferon production. As to quaternary structure, (Microbial infection) Interacts with African swine fever virus (ASFV) P14.5/E120R; this interaction interferes with the recruitment of IRF3 to TBK1, which in turn suppresses IRF3 phosphorylation, decreasing interferon production via the cGAS/STING pathway. In terms of assembly, (Microbial infection) Interacts with African swine fever virus (ASFV) MGF360-14L; this interaction mediates degradation of IRF3 through TRIM21 and ubiquitin-meditated proteolysis. (Microbial infection) Interacts with African swine fever virus (ASFV) E301R; this interaction inhibits nuclear translocation of IRF3 to the nucleus. As to quaternary structure, (Microbial infection) Interacts with African swine fever virus (ASFV) minor capsid protein M1249L; this interaction mediates IRF3 degradation. In terms of processing, constitutively phosphorylated on many Ser/Thr residues. Activated following phosphorylation by TBK1 and IKBKE. Innate adapter proteins, such as MAVS, STING1 or TICAM1, are first activated by viral RNA, cytosolic DNA, and bacterial lipopolysaccharide (LPS), respectively, leading to activation of the kinases TBK1 and IKBKE. These kinases then phosphorylate the adapter proteins on the pLxIS motif, leading to recruitment of IRF3, thereby licensing IRF3 for phosphorylation by TBK1. Phosphorylation at Ser-384 is followed by pyrophosphorylation at the same residue, promoting phosphorylation at Ser-394. Phosphorylated IRF3 dissociates from the adapter proteins, dimerizes, and then enters the nucleus to induce IFNs. Pyrophosphorylated by UAP1 following phosphorylation at Ser-384 by TBK1. Pyrophosphorylation promotes subsequent phosphorylation at Ser-394, leading to homodimerization of IRF3. Post-translationally, acetylation at Lys-364 by KAT8 inhibits recruimtent to promoters and transcription factor activity. Acetylation by KAT8 is promoted by phosphorylation at Ser-394. In terms of processing, ubiquitinated; ubiquitination involves RBCK1 leading to proteasomal degradation. Polyubiquitinated; ubiquitination involves TRIM21 leading to proteasomal degradation. Ubiquitinated by UBE3C, leading to its degradation. Deubiquitinated by USP5 on both 'Lys-48'-linked unanchored and 'Lys-63'-linked anchored polyubiquitin, leading to inhibition of antiviral innate immunity. ISGylated by HERC5 resulting in sustained IRF3 activation and in the inhibition of IRF3 ubiquitination by disrupting PIN1 binding. The phosphorylation state of IRF3 does not alter ISGylation. Post-translationally, (Microbial infection) Phosphorylated by pseudorabies virus protein kinase UL13; leading to decreased IRF3 binding to the IRF3-responsive promoters and downstream ISG expression. In terms of processing, proteolytically cleaved by apoptotic caspases during apoptosis, leading to its inactivation. Cleavage by CASP3 during virus-induced apoptosis inactivates it, preventing cytokine overproduction.

It localises to the cytoplasm. The protein localises to the nucleus. The protein resides in the mitochondrion. Its activity is regulated as follows. In the absence of viral infection, maintained as a monomer in an autoinhibited state. Phosphorylation by TBK1 and IKBKE disrupts this autoinhibition leading to the liberation of the DNA-binding and dimerization activities and its nuclear localization where it can activate type I IFN and ISG genes. Phosphorylation and activation follow the following steps: innate adapter proteins, such as MAVS, STING1 or TICAM1, are first activated by viral RNA, cytosolic DNA and bacterial lipopolysaccharide (LPS), respectively, leading to activation of the kinases TBK1 and IKBKE. These kinases then phosphorylate the adapter proteins on their pLxIS motif, leading to recruitment of IRF3, thereby licensing IRF3 for phosphorylation by TBK1. Phosphorylated IRF3 dissociates from the adapter proteins, dimerizes, and then enters the nucleus to induce IFNs. Its function is as follows. Key transcriptional regulator of type I interferon (IFN)-dependent immune responses which plays a critical role in the innate immune response against DNA and RNA viruses. Regulates the transcription of type I IFN genes (IFN-alpha and IFN-beta) and IFN-stimulated genes (ISG) by binding to an interferon-stimulated response element (ISRE) in their promoters. Acts as a more potent activator of the IFN-beta (IFNB) gene than the IFN-alpha (IFNA) gene and plays a critical role in both the early and late phases of the IFNA/B gene induction. Found in an inactive form in the cytoplasm of uninfected cells and following viral infection, double-stranded RNA (dsRNA), or toll-like receptor (TLR) signaling, is phosphorylated by IKBKE and TBK1 kinases. This induces a conformational change, leading to its dimerization and nuclear localization and association with CREB binding protein (CREBBP) to form dsRNA-activated factor 1 (DRAF1), a complex which activates the transcription of the type I IFN and ISG genes. Can activate distinct gene expression programs in macrophages and can induce significant apoptosis in primary macrophages. This chain is Interferon regulatory factor 3 (IRF3), found in Sus scrofa (Pig).